Consider the following 64-residue polypeptide: Beta-defensin 1 (64 aa).

Positions 1-22 (MRLHHLLLVLFFVVLSAGSGFT) are cleaved as a signal peptide. Disulfide bonds link cysteine 31–cysteine 60, cysteine 38–cysteine 53, and cysteine 43–cysteine 61.

The protein belongs to the beta-defensin family. As to quaternary structure, monomer. Homodimer.

The protein resides in the secreted. It is found in the membrane. Has bactericidal activity. May act as a ligand for C-C chemokine receptor CCR6. Positively regulates the sperm motility and bactericidal activity in a CCR6-dependent manner. Binds to CCR6 and triggers Ca2+ mobilization in the sperm which is important for its motility. This Ovis aries (Sheep) protein is Beta-defensin 1 (DEFB1).